The sequence spans 621 residues: 1-deoxy-D-xylulose-5-phosphate synthase (621 aa).

Thiamine diphosphate contacts are provided by residues H80 and 121-123; that span reads GHS. Residue D152 participates in Mg(2+) binding. Thiamine diphosphate contacts are provided by residues 153 to 154, N181, Y288, and E370; that span reads GA. N181 is a binding site for Mg(2+).

The protein belongs to the transketolase family. DXPS subfamily. As to quaternary structure, homodimer. The cofactor is Mg(2+). It depends on thiamine diphosphate as a cofactor.

It catalyses the reaction D-glyceraldehyde 3-phosphate + pyruvate + H(+) = 1-deoxy-D-xylulose 5-phosphate + CO2. The protein operates within metabolic intermediate biosynthesis; 1-deoxy-D-xylulose 5-phosphate biosynthesis; 1-deoxy-D-xylulose 5-phosphate from D-glyceraldehyde 3-phosphate and pyruvate: step 1/1. Its function is as follows. Catalyzes the acyloin condensation reaction between C atoms 2 and 3 of pyruvate and glyceraldehyde 3-phosphate to yield 1-deoxy-D-xylulose-5-phosphate (DXP). The polypeptide is 1-deoxy-D-xylulose-5-phosphate synthase (Shewanella sediminis (strain HAW-EB3)).